We begin with the raw amino-acid sequence, 279 residues long: Prohibitin-4, mitochondrial (279 aa).

N-acetylglycine is present on Gly-2. Topologically, residues 2–6 are mitochondrial matrix; sequence GSQQV. A helical; Signal-anchor for type II membrane protein membrane pass occupies residues 7–28; sequence AISFLTNLAKAAFGLGVAATAL. Residues 29 to 279 lie on the Mitochondrial intermembrane side of the membrane; it reads NSSLYTVDGG…SMLFNLNPGR (251 aa).

It belongs to the prohibitin family. Component of a prohibitin multimeric complex in mitochondrial membranes. In terms of tissue distribution, mostly expressed in proliferative tissues, including vasculature, shoot and root apical tissues. Accumulates in dry seeds.

The protein localises to the mitochondrion inner membrane. Prohibitin probably acts as a holdase/unfoldase for the stabilization of newly synthesized mitochondrial proteins. The polypeptide is Prohibitin-4, mitochondrial (PHB4) (Arabidopsis thaliana (Mouse-ear cress)).